Consider the following 418-residue polypeptide: MARAAFLFKTVGFGGLQNVPINDELSSHLLRAGNSPWQLTQFLDWISLGRGLATSALVPTAGSRYYQMSCLLSGTLQIPFRPNHRWGDIRFLRLVWSAPTLDGLVVAPPQVLAQPALQAQADRVYDCDDYPFLARDPRFKHRVYQQLSAVTLLNLTGFGPISYVRVDEDMWSGDVNQLLMNYFGHTFAEIAYTLCQASANRPWEHDGTYARMTQIILSLFWLSYVGVIHQQNTYRTFYFQCNRRGDAAEVWILSCSLNHSAQIRPGNRSLFVMPTSPDWNMDVNLILSSTLTGCLCSGSQLPLIDNNSVPAVSRNIHGWTGRAGNQLHGFQVRRMVTEFCDRLRRDGVMTQAQQNQIEALADQTQQFKRDKLEAWAREDDQYNQANPNSTMFRTKPFTNAQWGRGNTGATSAAIAALI.

It belongs to the orthoreovirus sigma-1 protein family. Interacts with protein mu-NS; in viral inclusions.

Its subcellular location is the virion. Functionally, inner capsid (core) component. This is Inner capsid protein sigma-2 (S2) from Mammalia (T1L).